The primary structure comprises 432 residues: Histidinol dehydrogenase (432 aa).

Residues Ser-240, Gln-262, and His-265 each coordinate substrate. 2 residues coordinate Zn(2+): Gln-262 and His-265. Catalysis depends on proton acceptor residues Glu-330 and His-331. Residues His-331, Asp-364, Glu-418, and His-423 each coordinate substrate. Asp-364 provides a ligand contact to Zn(2+). His-423 lines the Zn(2+) pocket.

It belongs to the histidinol dehydrogenase family. It depends on Zn(2+) as a cofactor.

It carries out the reaction L-histidinol + 2 NAD(+) + H2O = L-histidine + 2 NADH + 3 H(+). The protein operates within amino-acid biosynthesis; L-histidine biosynthesis; L-histidine from 5-phospho-alpha-D-ribose 1-diphosphate: step 9/9. In terms of biological role, catalyzes the sequential NAD-dependent oxidations of L-histidinol to L-histidinaldehyde and then to L-histidine. This is Histidinol dehydrogenase from Wolinella succinogenes (strain ATCC 29543 / DSM 1740 / CCUG 13145 / JCM 31913 / LMG 7466 / NCTC 11488 / FDC 602W) (Vibrio succinogenes).